A 229-amino-acid chain; its full sequence is Nectarin-1 (229 aa).

A signal peptide spans 1–32 (MAAFGINSKIFQSMEMAILFLLAISIDRYCFA). A disulfide bridge links Cys-42 with Cys-57. The N-linked (GlcNAc...) asparagine glycan is linked to Asn-60. The Cupin type-1 domain occupies 69–217 (LAISKPGATN…TFQINTEDVQ (149 aa)). Mn(2+)-binding residues include His-117, His-119, Glu-124, and His-163.

In terms of assembly, monomer. In the absence of manganese, it forms tetrameric and pentameric forms which show superoxide dismutase activity. It depends on Mn(2+) as a cofactor. In terms of tissue distribution, nectary tissues and to a lower level ovary. Not detected in petals, stems, leaves, roots or other floral tissues.

The protein resides in the secreted. It is found in the extracellular space. Its subcellular location is the apoplast. It carries out the reaction 2 superoxide + 2 H(+) = H2O2 + O2. In terms of biological role, may interact with bacterial adhesins thereby protecting the reproductive tissues from microbial attack. Has no oxalate oxidase activity. This Nicotiana langsdorffii x Nicotiana sanderae (Ornamental tobacco) protein is Nectarin-1 (NECI).